The following is a 311-amino-acid chain: Zeta-sarcoglycan (311 aa).

Over 1-50 the chain is Cytoplasmic; the sequence is MDRSTDLDIQELKMTREQYILATQQNNLPRPENAQLYPVGIYGWRKRCLY. The helical; Signal-anchor for type II membrane protein transmembrane segment at 51–71 threads the bilayer; it reads FFVLLLLVTMIVNLAMTIWIL. Over 72–311 the chain is Extracellular; it reads KVMNFTVDGM…QSSSSICLWN (240 aa). Asparagine 75 and asparagine 123 each carry an N-linked (GlcNAc...) asparagine glycan. Cysteine 285 and cysteine 301 are disulfide-bonded.

The protein belongs to the sarcoglycan beta/delta/gamma/zeta family. As to expression, expressed in the heart, skeletal muscle and arterial vascular smooth muscle.

It localises to the cell membrane. Its subcellular location is the sarcolemma. The protein localises to the cytoplasm. The protein resides in the cytoskeleton. In terms of biological role, component of the sarcoglycan complex, a subcomplex of the dystrophin-glycoprotein complex which forms a link between the F-actin cytoskeleton and the extracellular matrix. May play a role in the maintenance of striated muscle membrane stability. The chain is Zeta-sarcoglycan (Sgcz) from Mus musculus (Mouse).